Here is an 827-residue protein sequence, read N- to C-terminus: Disintegrin and metalloproteinase domain-containing protein 17 (827 aa).

An N-terminal signal peptide occupies residues 1 to 17 (MRQRLLFLTTLVPFVLA). Positions 18 to 214 (PRPPEEPGSG…SEEFVRRVKR (197 aa)) are excised as a propeptide. Residue N157 is glycosylated (N-linked (GlcNAc...) asparagine). Residues 182–189 (KVCGYLNA) carry the Cysteine switch motif. Residue C184 coordinates Zn(2+). Over 215–671 (RAEPNPLKNT…NTFGKFLADN (457 aa)) the chain is Extracellular. Residues 223–474 (NTCKLLVVAD…KAQECFQERS (252 aa)) form the Peptidase M12B domain. 3 disulfides stabilise this stretch: C225–C333, C365–C469, and C423–C453. N-linked (GlcNAc...) asparagine glycosylation is present at N264. H405 is a binding site for Zn(2+). E406 is an active-site residue. Positions 409 and 415 each coordinate Zn(2+). N452, N498, N539, and N551 each carry an N-linked (GlcNAc...) asparagine glycan. The 89-residue stretch at 475–563 (NKVCGNSRVD…ECPPPGDAED (89 aa)) folds into the Disintegrin domain. Cystine bridges form between C534–C555, C573–C582, C578–C591, and C593–C600. A crambin-like region spans residues 603 to 671 (CCRNLSGPCV…NTFGKFLADN (69 aa)). The N-linked (GlcNAc...) asparagine glycan is linked to N606. A helical membrane pass occupies residues 672 to 692 (IVGSVLVFSLIFWIPFSILVH). Residues 693-827 (CVDKKLDKQY…SRVDSKETEC (135 aa)) are Cytoplasmic-facing. The SH3-binding motif lies at 731-738 (PAPQTPGR). At T735 the chain carries Phosphothreonine; by MAPK14. Phosphothreonine is present on T764. The segment at 766 to 827 (QEDPSTDSHV…SRVDSKETEC (62 aa)) is disordered. S770 bears the Phosphoserine mark. Composition is skewed to basic and acidic residues over residues 771 to 784 (TDSHVDDDGFEKDP), 794 to 810 (SFEDLTDHPVTRSEKAA), and 818 to 827 (SRVDSKETEC). Phosphoserine occurs at positions 794 and 822.

In terms of assembly, interacts with MAD2L1, MAPK14 and MUC1. Interacts with iRhom1/RHBDF1 and iRhom2/RHBDF2. Interacts with FRMD8 via its interaction with iRhom1/RHBDF1 and iRhom2/RHBDF2. Interacts with TSPAN8. It depends on Zn(2+) as a cofactor. Post-translationally, the precursor is cleaved by a furin endopeptidase. In terms of processing, phosphorylated. Stimulation by growth factor or phorbol 12-myristate 13-acetate induces phosphorylation of Ser-822 but decreases phosphorylation of Ser-794. Phosphorylation at Thr-735 by MAPK14 is required for ADAM17-mediated ectodomain shedding.

The protein resides in the membrane. It catalyses the reaction Narrow endopeptidase specificity. Cleaves Pro-Leu-Ala-Gln-Ala-|-Val-Arg-Ser-Ser-Ser in the membrane-bound, 26-kDa form of tumor necrosis factor alpha (TNFalpha). Similarly cleaves other membrane-anchored, cell-surface proteins to 'shed' the extracellular domains.. Functionally, transmembrane metalloprotease which mediates the ectodomain shedding of a myriad of transmembrane proteins including adhesion proteins, growth factor precursors and cytokines important for inflammation and immunity. Cleaves the membrane-bound precursor of TNF-alpha to its mature soluble form. Responsible for the proteolytical release of soluble JAM3 from endothelial cells surface. Responsible for the proteolytic release of several other cell-surface proteins, including p75 TNF-receptor, interleukin 1 receptor type II, p55 TNF-receptor, transforming growth factor-alpha, L-selectin, growth hormone receptor, MUC1 and the amyloid precursor protein. Acts as an activator of Notch pathway by mediating cleavage of Notch, generating the membrane-associated intermediate fragment called Notch extracellular truncation (NEXT). Plays a role in the proteolytic processing of ACE2. Plays a role in hemostasis through shedding of GP1BA, the platelet glycoprotein Ib alpha chain. Mediates the proteolytic cleavage of LAG3, leading to release the secreted form of LAG3. Mediates the proteolytic cleavage of IL6R, leading to the release of secreted form of IL6R. Mediates the proteolytic cleavage and shedding of FCGR3A upon NK cell stimulation, a mechanism that allows for increased NK cell motility and detachment from opsonized target cells. Cleaves TREM2, resulting in shedding of the TREM2 ectodomain. The protein is Disintegrin and metalloproteinase domain-containing protein 17 (Adam17) of Rattus norvegicus (Rat).